We begin with the raw amino-acid sequence, 369 residues long: 3-dehydroquinate synthase (369 aa).

NAD(+) is bound by residues 72–77 (SGEKEK), 130–131 (TT), Lys142, and Lys151. Glu184, His247, and His264 together coordinate Zn(2+).

This sequence belongs to the sugar phosphate cyclases superfamily. Dehydroquinate synthase family. Requires Co(2+) as cofactor. It depends on Zn(2+) as a cofactor. The cofactor is NAD(+).

The protein localises to the cytoplasm. It carries out the reaction 7-phospho-2-dehydro-3-deoxy-D-arabino-heptonate = 3-dehydroquinate + phosphate. It participates in metabolic intermediate biosynthesis; chorismate biosynthesis; chorismate from D-erythrose 4-phosphate and phosphoenolpyruvate: step 2/7. In terms of biological role, catalyzes the conversion of 3-deoxy-D-arabino-heptulosonate 7-phosphate (DAHP) to dehydroquinate (DHQ). The polypeptide is 3-dehydroquinate synthase (Bacillus cytotoxicus (strain DSM 22905 / CIP 110041 / 391-98 / NVH 391-98)).